Reading from the N-terminus, the 694-residue chain is Heat shock protein homolog SSE1 (694 aa).

Residues 671 to 694 (AQRSADSEAKKDATPEGDAQMDLD) are disordered. The segment covering 675–684 (ADSEAKKDAT) has biased composition (basic and acidic residues).

This sequence belongs to the heat shock protein 70 family.

The protein resides in the cytoplasm. This is Heat shock protein homolog SSE1 (SSE1) from Candida glabrata (strain ATCC 2001 / BCRC 20586 / JCM 3761 / NBRC 0622 / NRRL Y-65 / CBS 138) (Yeast).